A 258-amino-acid chain; its full sequence is Deoxyribose-phosphate aldolase (258 aa).

D102 acts as the Proton donor/acceptor in catalysis. Catalysis depends on K165, which acts as the Schiff-base intermediate with acetaldehyde. Catalysis depends on K199, which acts as the Proton donor/acceptor.

It belongs to the DeoC/FbaB aldolase family. DeoC type 2 subfamily.

The protein localises to the cytoplasm. It carries out the reaction 2-deoxy-D-ribose 5-phosphate = D-glyceraldehyde 3-phosphate + acetaldehyde. The protein operates within carbohydrate degradation; 2-deoxy-D-ribose 1-phosphate degradation; D-glyceraldehyde 3-phosphate and acetaldehyde from 2-deoxy-alpha-D-ribose 1-phosphate: step 2/2. Functionally, catalyzes a reversible aldol reaction between acetaldehyde and D-glyceraldehyde 3-phosphate to generate 2-deoxy-D-ribose 5-phosphate. The sequence is that of Deoxyribose-phosphate aldolase from Vibrio campbellii (strain ATCC BAA-1116).